A 206-amino-acid polypeptide reads, in one-letter code: Sclerostin domain-containing protein 1 (206 aa).

Positions 1-22 (MLLSAIHFYGLLLACTFTRSYS) are cleaved as a signal peptide. Residues 40 to 68 (APASPSSNSTLNQARNGGRHYAGTGSDRN) form a disordered region. Over residues 43-54 (SPSSNSTLNQAR) the composition is skewed to polar residues. The N-linked (GlcNAc...) asparagine glycan is linked to Asn47. 4 cysteine pairs are disulfide-bonded: Cys75–Cys133, Cys89–Cys147, Cys100–Cys163, and Cys104–Cys165. The 96-residue stretch at 75 to 170 (CRELRSTKYI…TACKCKRYTR (96 aa)) folds into the CTCK domain. Asn173 carries an N-linked (GlcNAc...) asparagine glycan. Residues 176–206 (SHNFEGTSQAKPVQHHKERKRASKSSKHSTS) are disordered. Residues 188–206 (VQHHKERKRASKSSKHSTS) show a composition bias toward basic residues.

This sequence belongs to the sclerostin family. Interacts with LRP6.

Its subcellular location is the secreted. Functionally, can activate or inhibit Wnt signaling in a context-dependent manner. Activates the canonical Wnt pathway whereby acts through Disheveled proteins and beta-catenin. Antagonises Wnt signaling through the canonical pathways presumably by blocking accessibility of certain WNTs to their receptors. Induces posterior neural markers via components of the canonical Wnt pathway. This chain is Sclerostin domain-containing protein 1 (SOSTDC1), found in Gallus gallus (Chicken).